A 506-amino-acid polypeptide reads, in one-letter code: Protoheme IX farnesyltransferase, mitochondrial (506 aa).

The N-terminal 42 residues, 1–42 (MILRSSLGRLGVARESPLCLQCLNRSRPSFPAVNKLASISRL), are a transit peptide targeting the mitochondrion. Residues 45–61 (TVAGQSPSSSVNKTYFS) are compositionally biased toward polar residues. A disordered region spans residues 45-131 (TVAGQSPSSS…AEPVIPPDAS (87 aa)). The segment covering 73 to 88 (PSLFTSLSPSNSPSQL) has biased composition (low complexity). The span at 89-100 (NRGHSTPSTSPE) shows a compositional bias: polar residues. A run of 8 helical transmembrane segments spans residues 163–183 (FLVL…SILA), 199–221 (LTFL…LNMI), 247–267 (AAVF…YFGT), 269–289 (PTVT…YTPL), 297–317 (TWIG…AAAG), 337–357 (LGGW…FNAL), 390–410 (VLMF…HGFL), and 439–459 (GLFW…LVTK).

The protein belongs to the UbiA prenyltransferase family.

The protein localises to the mitochondrion membrane. It carries out the reaction heme b + (2E,6E)-farnesyl diphosphate + H2O = Fe(II)-heme o + diphosphate. In terms of biological role, converts protoheme IX and farnesyl diphosphate to heme O. In Emericella nidulans (strain FGSC A4 / ATCC 38163 / CBS 112.46 / NRRL 194 / M139) (Aspergillus nidulans), this protein is Protoheme IX farnesyltransferase, mitochondrial (cox10).